Reading from the N-terminus, the 333-residue chain is 5-formaminoimidazole-4-carboxamide-1-(beta)-D-ribofuranosyl 5'-monophosphate synthetase (333 aa).

Positions 10 and 70 each coordinate 5-amino-1-(5-phospho-beta-D-ribosyl)imidazole-4-carboxamide. Residues 91-324 (KEVLKWESDR…IAREIKIAIE (234 aa)) enclose the ATP-grasp domain. Residues 121–181 (PDDI…VPIY) and E203 each bind ATP. N231 serves as a coordination point for 5-amino-1-(5-phospho-beta-D-ribosyl)imidazole-4-carboxamide. Mg(2+) contacts are provided by E269 and E282.

Belongs to the phosphohexose mutase family. Requires Mg(2+) as cofactor. It depends on Mn(2+) as a cofactor.

The catalysed reaction is 5-amino-1-(5-phospho-beta-D-ribosyl)imidazole-4-carboxamide + formate + ATP = 5-formamido-1-(5-phospho-D-ribosyl)imidazole-4-carboxamide + ADP + phosphate. It participates in purine metabolism; IMP biosynthesis via de novo pathway; 5-formamido-1-(5-phospho-D-ribosyl)imidazole-4-carboxamide from 5-amino-1-(5-phospho-D-ribosyl)imidazole-4-carboxamide (formate route): step 1/1. Its function is as follows. Catalyzes the ATP- and formate-dependent formylation of 5-aminoimidazole-4-carboxamide-1-beta-d-ribofuranosyl 5'-monophosphate (AICAR) to 5-formaminoimidazole-4-carboxamide-1-beta-d-ribofuranosyl 5'-monophosphate (FAICAR) in the absence of folates. This Pyrococcus horikoshii (strain ATCC 700860 / DSM 12428 / JCM 9974 / NBRC 100139 / OT-3) protein is 5-formaminoimidazole-4-carboxamide-1-(beta)-D-ribofuranosyl 5'-monophosphate synthetase.